The following is a 619-amino-acid chain: 1-deoxy-D-xylulose-5-phosphate synthase (619 aa).

Thiamine diphosphate is bound by residues His74 and 115-117 (GHS). Asp146 serves as a coordination point for Mg(2+). Thiamine diphosphate-binding positions include 147 to 148 (GA), Asn175, Tyr285, and Glu365. Asn175 contacts Mg(2+).

It belongs to the transketolase family. DXPS subfamily. As to quaternary structure, homodimer. Mg(2+) serves as cofactor. Requires thiamine diphosphate as cofactor.

The enzyme catalyses D-glyceraldehyde 3-phosphate + pyruvate + H(+) = 1-deoxy-D-xylulose 5-phosphate + CO2. It functions in the pathway metabolic intermediate biosynthesis; 1-deoxy-D-xylulose 5-phosphate biosynthesis; 1-deoxy-D-xylulose 5-phosphate from D-glyceraldehyde 3-phosphate and pyruvate: step 1/1. Functionally, catalyzes the acyloin condensation reaction between C atoms 2 and 3 of pyruvate and glyceraldehyde 3-phosphate to yield 1-deoxy-D-xylulose-5-phosphate (DXP). The polypeptide is 1-deoxy-D-xylulose-5-phosphate synthase (Clostridium acetobutylicum (strain ATCC 824 / DSM 792 / JCM 1419 / IAM 19013 / LMG 5710 / NBRC 13948 / NRRL B-527 / VKM B-1787 / 2291 / W)).